Reading from the N-terminus, the 573-residue chain is Urease subunit alpha 1 (573 aa).

One can recognise a Urease domain in the interval 136–573 (GGIDTHVHFI…LPLAQRYFLF (438 aa)). Ni(2+) contacts are provided by histidine 141, histidine 143, and lysine 224. Residue lysine 224 is modified to N6-carboxylysine. Position 226 (histidine 226) interacts with substrate. Ni(2+)-binding residues include histidine 253 and histidine 279. The active-site Proton donor is histidine 327. Ni(2+) is bound at residue aspartate 367.

This sequence belongs to the metallo-dependent hydrolases superfamily. Urease alpha subunit family. As to quaternary structure, may form a heterohexamer of 3 UreC (alpha) and 3 UreAB (gamma/beta) subunits. May also form a heterotrimer of UreA (gamma), UreB (beta) and UreC (alpha) subunits. Three heterotrimers associate to form the active enzyme. It depends on Ni cation as a cofactor. Post-translationally, carboxylation allows a single lysine to coordinate two nickel ions.

The protein resides in the cytoplasm. The enzyme catalyses urea + 2 H2O + H(+) = hydrogencarbonate + 2 NH4(+). It participates in nitrogen metabolism; urea degradation; CO(2) and NH(3) from urea (urease route): step 1/1. This Streptomyces coelicolor (strain ATCC BAA-471 / A3(2) / M145) protein is Urease subunit alpha 1.